The following is a 418-amino-acid chain: Putative ion-transport protein YfeO (418 aa).

12 consecutive transmembrane segments (helical) span residues 10-30 (LLLS…LIVV), 54-74 (DSPL…GLVI), 99-119 (ALPG…SLGP), 120-140 (EHPI…RLLP), 149-169 (ILAS…AALI), 186-206 (LFAP…FFHP), 223-243 (ILSG…AVWC), 258-278 (VLVL…GGPV), 300-320 (DYFL…ASGF), 322-342 (GGRI…LHEH), 343-363 (VPAV…VLVV), and 371-391 (LFMA…CIVM).

It belongs to the chloride channel (TC 2.A.49) family.

It localises to the cell membrane. The sequence is that of Putative ion-transport protein YfeO from Escherichia coli (strain 55989 / EAEC).